A 269-amino-acid polypeptide reads, in one-letter code: Shikimate dehydrogenase (NADP(+)) (269 aa).

Residues 17–19 (SKS) and threonine 64 each bind shikimate. Lysine 68 functions as the Proton acceptor in the catalytic mechanism. Glutamate 80 contributes to the NADP(+) binding site. Residues asparagine 89 and aspartate 105 each coordinate shikimate. Residues 130 to 134 (GAGGA), 154 to 159 (NRTHAK), and methionine 213 each bind NADP(+). Tyrosine 215 is a shikimate binding site. An NADP(+)-binding site is contributed by glycine 237.

This sequence belongs to the shikimate dehydrogenase family. Homodimer.

It catalyses the reaction shikimate + NADP(+) = 3-dehydroshikimate + NADPH + H(+). It participates in metabolic intermediate biosynthesis; chorismate biosynthesis; chorismate from D-erythrose 4-phosphate and phosphoenolpyruvate: step 4/7. Involved in the biosynthesis of the chorismate, which leads to the biosynthesis of aromatic amino acids. Catalyzes the reversible NADPH linked reduction of 3-dehydroshikimate (DHSA) to yield shikimate (SA). The chain is Shikimate dehydrogenase (NADP(+)) from Neisseria cinerea.